A 114-amino-acid chain; its full sequence is Large ribosomal subunit protein bL20 (114 aa).

This sequence belongs to the bacterial ribosomal protein bL20 family.

Its function is as follows. Binds directly to 23S ribosomal RNA and is necessary for the in vitro assembly process of the 50S ribosomal subunit. It is not involved in the protein synthesizing functions of that subunit. The sequence is that of Large ribosomal subunit protein bL20 from Flavobacterium psychrophilum (strain ATCC 49511 / DSM 21280 / CIP 103535 / JIP02/86).